We begin with the raw amino-acid sequence, 257 residues long: Ribosomal RNA small subunit methyltransferase J (257 aa).

Residues 107-108 (RD), 123-124 (ER), and Asp177 contribute to the S-adenosyl-L-methionine site.

The protein belongs to the methyltransferase superfamily. RsmJ family.

It localises to the cytoplasm. The catalysed reaction is guanosine(1516) in 16S rRNA + S-adenosyl-L-methionine = N(2)-methylguanosine(1516) in 16S rRNA + S-adenosyl-L-homocysteine + H(+). Its function is as follows. Specifically methylates the guanosine in position 1516 of 16S rRNA. The protein is Ribosomal RNA small subunit methyltransferase J of Haemophilus influenzae (strain PittEE).